A 399-amino-acid chain; its full sequence is Centrosomal protein 43 (399 aa).

The LisH domain maps to 70–102 (DGRLVASLVAEFLQFFNLDFTLAVFQPETSTFQ). A Phosphothreonine modification is found at T143. Residues 143 to 311 (TSGEGALDLS…LKESESKRGN (169 aa)) are disordered. 4 positions are modified to phosphoserine: S152, S156, S160, and S202. Over residues 197–209 (NDASHSDTSISSS) the composition is skewed to low complexity. Acidic residues predominate over residues 245–256 (PEEDDLEGDSFF). The span at 286 to 302 (APPLKSGLSSLAGAPSL) shows a compositional bias: low complexity. Residues S301 and S326 each carry the phosphoserine modification. Residues 328 to 357 (GLGTGEEDDYVDDFNSTSHRSEKSELSIGE) form a disordered region. Y337 is modified (phosphotyrosine).

The protein belongs to the CEP43 family. As to quaternary structure, homodimer. Part of a ternary complex that contains CEP350, CEP43 and MAPRE1. Interacts directly with CEP350 and MAPRE1. Interacts with CEP19. Interacts (via N-terminus) with CEP350 (via C-terminus).

It localises to the cytoplasm. The protein resides in the cytoskeleton. Its subcellular location is the microtubule organizing center. It is found in the centrosome. The protein localises to the centriole. It localises to the cilium basal body. Its function is as follows. Required for anchoring microtubules to the centrosomes. Required for ciliation. This Bos taurus (Bovine) protein is Centrosomal protein 43 (CEP43).